The sequence spans 299 residues: Protease HtpX homolog (299 aa).

2 helical membrane-spanning segments follow: residues 15–35 and 39–59; these read ILLL…GYLF and GLGG…SMIF. A Zn(2+)-binding site is contributed by His143. Glu144 is a catalytic residue. His147 is a binding site for Zn(2+). A run of 2 helical transmembrane segments spans residues 158 to 178 and 198 to 218; these read IAVA…RMMW and IIML…ATLV. Glu227 contributes to the Zn(2+) binding site.

Belongs to the peptidase M48B family. The cofactor is Zn(2+).

The protein localises to the cell membrane. The chain is Protease HtpX homolog from Streptococcus pneumoniae (strain P1031).